The chain runs to 335 residues: RNA 3'-terminal phosphate cyclase (335 aa).

ATP is bound by residues Gln-101 and 282–285 (HMGD). The active-site Tele-AMP-histidine intermediate is the His-306.

The protein belongs to the RNA 3'-terminal cyclase family. Type 1 subfamily.

It localises to the cytoplasm. The enzyme catalyses a 3'-end 3'-phospho-ribonucleotide-RNA + ATP = a 3'-end 2',3'-cyclophospho-ribonucleotide-RNA + AMP + diphosphate. Its function is as follows. Catalyzes the conversion of 3'-phosphate to a 2',3'-cyclic phosphodiester at the end of RNA. The mechanism of action of the enzyme occurs in 3 steps: (A) adenylation of the enzyme by ATP; (B) transfer of adenylate to an RNA-N3'P to produce RNA-N3'PP5'A; (C) and attack of the adjacent 2'-hydroxyl on the 3'-phosphorus in the diester linkage to produce the cyclic end product. The biological role of this enzyme is unknown but it is likely to function in some aspects of cellular RNA processing. This Sulfolobus acidocaldarius (strain ATCC 33909 / DSM 639 / JCM 8929 / NBRC 15157 / NCIMB 11770) protein is RNA 3'-terminal phosphate cyclase.